The chain runs to 541 residues: Carotenoid 9,10(9',10')-cleavage dioxygenase 1 (541 aa).

Fe cation contacts are provided by H222, H270, H336, and H526.

The protein belongs to the carotenoid oxygenase family. Requires Fe(2+) as cofactor.

The enzyme catalyses all-trans-zeaxanthin + 2 O2 = 4,9-dimethyldodeca-2,4,6,8,10-pentaenedial + 2 (3R)-hydroxy-beta-ionone. Its function is as follows. Cleaves a variety of carotenoids at the 9-10 and 9'-10' double bonds. Probably not involved in abscisic acid biosynthesis. This chain is Carotenoid 9,10(9',10')-cleavage dioxygenase 1 (CCD1), found in Pisum sativum (Garden pea).